Here is a 440-residue protein sequence, read N- to C-terminus: Thymidine phosphorylase (440 aa).

This sequence belongs to the thymidine/pyrimidine-nucleoside phosphorylase family. Homodimer.

It carries out the reaction thymidine + phosphate = 2-deoxy-alpha-D-ribose 1-phosphate + thymine. Its pathway is pyrimidine metabolism; dTMP biosynthesis via salvage pathway; dTMP from thymine: step 1/2. In terms of biological role, the enzymes which catalyze the reversible phosphorolysis of pyrimidine nucleosides are involved in the degradation of these compounds and in their utilization as carbon and energy sources, or in the rescue of pyrimidine bases for nucleotide synthesis. This chain is Thymidine phosphorylase, found in Shigella dysenteriae serotype 1 (strain Sd197).